The following is a 282-amino-acid chain: uncharacterized protein (282 aa).

Residues 5–140 (DELIKLHEEH…SFQPYTKKLD (136 aa)) form the N-acetyltransferase domain.

It belongs to the acetyltransferase family.

This is an uncharacterized protein from Bacillus subtilis (strain 168).